The primary structure comprises 450 residues: uncharacterized protein (450 aa).

The TRAM domain occupies 1–58; sequence MQKNQIVDLEITDLSYEAMGVAHLDGMTVFVNNALPGEIVSAKLLKVKKNFAFAKIEK. S-adenosyl-L-methionine-binding residues include Gln280, Tyr309, Glu330, and Asp378. Cys405 serves as the catalytic Nucleophile.

This sequence belongs to the class I-like SAM-binding methyltransferase superfamily. RNA M5U methyltransferase family.

This is an uncharacterized protein from Lactobacillus johnsonii (strain CNCM I-12250 / La1 / NCC 533).